A 239-amino-acid chain; its full sequence is Tumor necrosis factor ligand superfamily member 14 (239 aa).

Topologically, residues 1 to 37 (MESVVQPSVFVVDGQTDIPFRRLEQNHRRRRCGTVQV) are cytoplasmic. A helical; Signal-anchor for type II membrane protein membrane pass occupies residues 38–58 (SLALVLLLGAGLATQGWFLLR). The Extracellular segment spans residues 59 to 239 (LHQRLGDIVA…TRSYFGAFMV (181 aa)). The region spanning 92-239 (PAAHLTGANA…TRSYFGAFMV (148 aa)) is the THD domain. Residue N100 is glycosylated (N-linked (GlcNAc...) asparagine). The cysteines at positions 152 and 187 are disulfide-linked. N-linked (GlcNAc...) asparagine glycosylation occurs at N191.

The protein belongs to the tumor necrosis factor family. As to quaternary structure, homotrimer. Interacts with TNFRSF14. In terms of processing, the soluble form derives from the membrane form by proteolytic processing.

The protein localises to the cell membrane. Its subcellular location is the secreted. Functionally, cytokine that binds to TNFRSF3/LTBR. Binding to the decoy receptor TNFRSF6B modulates its effects. Activates NFKB and stimulates the proliferation of T-cells. Acts as a ligand for TNFRSF14/HVEM. Upon binding to TNFRSF14/HVEM, delivers costimulatory signals to T cells, leading to T cell proliferation and IFNG production. In Mus musculus (Mouse), this protein is Tumor necrosis factor ligand superfamily member 14 (Tnfsf14).